The sequence spans 217 residues: Probable disulfide bond formation protein D (217 aa).

The first 28 residues, 1 to 28 (MKSSNKLMALGIVFSIAVLIVIGTIVYS), serve as a signal peptide directing secretion. A disulfide bridge links Cys66 with Cys69.

The protein belongs to the thioredoxin family. DsbA subfamily.

Functionally, may be required for disulfide bond formation in some proteins. This is Probable disulfide bond formation protein D (bdbD) from Bacillus anthracis.